The chain runs to 141 residues: Large ribosomal subunit protein uL11 (141 aa).

Belongs to the universal ribosomal protein uL11 family. In terms of assembly, part of the ribosomal stalk of the 50S ribosomal subunit. Interacts with L10 and the large rRNA to form the base of the stalk. L10 forms an elongated spine to which L12 dimers bind in a sequential fashion forming a multimeric L10(L12)X complex. One or more lysine residues are methylated.

Forms part of the ribosomal stalk which helps the ribosome interact with GTP-bound translation factors. This chain is Large ribosomal subunit protein uL11, found in Thermotoga sp. (strain RQ2).